Consider the following 555-residue polypeptide: Transmembrane protein 87A (555 aa).

Residues 1 to 21 form the signal peptide; it reads MAVAAWLQVSPVIFLLLGAQP. At 22–225 the chain is on the lumenal side; the sequence is FPLSFLGAGP…YEYLTLEDYP (204 aa). 2 cysteine pairs are disulfide-bonded: cysteine 74/cysteine 128 and cysteine 89/cysteine 431. Asparagine 79, asparagine 157, and asparagine 160 each carry an N-linked (GlcNAc...) asparagine glycan. A helical transmembrane segment spans residues 226–246; sequence LMIFFMVMCIVYVLFGVLWLA. Residues 247–257 lie on the Cytoplasmic side of the membrane; that stretch reads WSACYWRDLLR. A helical transmembrane segment spans residues 258 to 278; it reads IQFWIGAVIFLGMFEKAVFYA. At 279-305 the chain is on the lumenal side; that stretch reads EFQNIRYKGESVQNALVLAELLSAVKR. Residues 306–322 traverse the membrane as a helical segment; sequence SLARTLVIIVSLGYGIV. The Cytoplasmic portion of the chain corresponds to 323 to 325; the sequence is KPR. A helical transmembrane segment spans residues 326 to 346; sequence LGVTLHKVVVAGALYLLFSGM. The Lumenal portion of the chain corresponds to 347–361; that stretch reads EGVLRVTGAQTDLAS. Residues 362 to 382 traverse the membrane as a helical segment; that stretch reads LAFIPLAFLDTALCWWIFISL. Over 383 to 403 the chain is Cytoplasmic; that stretch reads TQTMKLLKLRRNIVKLSLYRH. Residues 404–424 traverse the membrane as a helical segment; sequence FTNTLILAVAASIVFIIWTTM. Topologically, residues 425 to 437 are lumenal; sequence KFRIVTCQSDWRE. Residues 438 to 458 form a helical membrane-spanning segment; it reads LWVDDAIWRLLFSMILFVIMI. Residues 459-555 lie on the Cytoplasmic side of the membrane; sequence LWRPSANNQR…ITHFERSKME (97 aa). The tract at residues 491–515 is disordered; that stretch reads SFEGMKMRSTKQEPNGTSKVNKAQE. Polar residues predominate over residues 502 to 511; sequence QEPNGTSKVN. Phosphoserine is present on serine 540.

Belongs to the LU7TM family. TMEM87 subfamily. In terms of assembly, may interact with STOML3; STOML3 potentiates the mechanosensitive ion channel activity associated with TMEM87A. Highly expressed in sensory neurons responsive to mechanical force.

Its subcellular location is the cell membrane. It localises to the golgi apparatus membrane. The protein resides in the cell projection. It is found in the ruffle. Functionally, potential monoatomic ion channel gated by mechanical force, implicated in normal touch sensitivity through the generation of mechanically activated currents. However, a direct channel activity is debated and an alternative could be that it functions as a chaperone for an unidentified mechanosensitive ion channel. Could also be involved in cell mechanosensitivity regulating cell adhesion and migration. May also be involved in retrograde transport from endosomes to the trans-Golgi network (TGN). This is Transmembrane protein 87A from Mus musculus (Mouse).